Reading from the N-terminus, the 227-residue chain is N-acetyltransferase 8B (227 aa).

The Cytoplasmic segment spans residues 1–42; the sequence is MAPYHIRKYQESDRKSVVGLLSGGMAEHAPATFRRLLKLPRT. A helical; Signal-anchor for type II membrane protein transmembrane segment spans residues 43–63; sequence LILLLGGALALLLVSGSWILA. The N-acetyltransferase domain occupies 61–214; sequence ILALVFSLSL…ARLVDLHTVH (154 aa). The Lumenal portion of the chain corresponds to 64–227; the sequence is LVFSLSLLPA…HLPSAQAGRL (164 aa). At K99 the chain carries N6-acetyllysine.

It belongs to the NAT8 family. In terms of processing, acetylation on Lys-99 modulates enzymatic activity.

The protein resides in the endoplasmic reticulum-Golgi intermediate compartment membrane. It is found in the endoplasmic reticulum membrane. It carries out the reaction L-lysyl-[protein] + acetyl-CoA = N(6)-acetyl-L-lysyl-[protein] + CoA + H(+). Allosterically regulated by acetylation at residue Lys-99. Functionally, endoplasmic reticulum (ER)-membrane-bound lysine N-acetyltransferase catalyzing the N6-acetylation of lysine residues in the lumen of the ER in various proteins, including PROM1 and BACE1, using acetyl-CoA as acetyl donor. Thereby, may regulate apoptosis through the acetylation and the regulation of the expression of PROM1. Acetylates and stabilizes BACE1 immature protein, leading to increased steady-state levels in neurons. By acting on BACE1 expression, may regulate amyloid beta-peptide formation. N(6)-lysine acetylation in ER maintains protein homeostasis and regulates reticulophagy. The sequence is that of N-acetyltransferase 8B from Homo sapiens (Human).